A 173-amino-acid polypeptide reads, in one-letter code: MNDLRYPIGQFTYKRPITEEMIDTWIQEIEDLPHELTKAIKDLDQKQLDTPYRVGGWTVRQVVHHVVDSHMNSYIRFKLALTEKNPTIKPYKEEKWAELPDSKLPVDVSLVMLDSLHKRWVNLLYSLEIEDLEKTFNHPETGETKLAVAIGLYAWHGRHHTAHITSLRKRLNW.

Residues H65, H156, and H160 each coordinate Zn(2+).

Belongs to the metal hydrolase YfiT family. Homodimer. Zn(2+) serves as cofactor.

It localises to the cytoplasm. Its function is as follows. Possible metal-dependent hydrolase. In Bacillus cereus (strain G9842), this protein is Putative metal-dependent hydrolase BCG9842_B2589.